A 150-amino-acid polypeptide reads, in one-letter code: Protein ORF35 (150 aa).

The protein is Protein ORF35 (ORF35) of Homo sapiens (Human).